A 188-amino-acid polypeptide reads, in one-letter code: Probable nicotinate-nucleotide adenylyltransferase (188 aa).

The protein belongs to the NadD family.

The enzyme catalyses nicotinate beta-D-ribonucleotide + ATP + H(+) = deamido-NAD(+) + diphosphate. It functions in the pathway cofactor biosynthesis; NAD(+) biosynthesis; deamido-NAD(+) from nicotinate D-ribonucleotide: step 1/1. In terms of biological role, catalyzes the reversible adenylation of nicotinate mononucleotide (NaMN) to nicotinic acid adenine dinucleotide (NaAD). This chain is Probable nicotinate-nucleotide adenylyltransferase, found in Salinispora arenicola (strain CNS-205).